A 352-amino-acid chain; its full sequence is Methylthioribose-1-phosphate isomerase (352 aa).

Residues Arg49–Ala51, Arg93, and Gln202 contribute to the substrate site. Asp243 functions as the Proton donor in the catalytic mechanism. Asn253 to Lys254 is a binding site for substrate.

This sequence belongs to the eIF-2B alpha/beta/delta subunits family. MtnA subfamily.

The enzyme catalyses 5-(methylsulfanyl)-alpha-D-ribose 1-phosphate = 5-(methylsulfanyl)-D-ribulose 1-phosphate. The protein operates within amino-acid biosynthesis; L-methionine biosynthesis via salvage pathway; L-methionine from S-methyl-5-thio-alpha-D-ribose 1-phosphate: step 1/6. Functionally, catalyzes the interconversion of methylthioribose-1-phosphate (MTR-1-P) into methylthioribulose-1-phosphate (MTRu-1-P). The sequence is that of Methylthioribose-1-phosphate isomerase from Magnetococcus marinus (strain ATCC BAA-1437 / JCM 17883 / MC-1).